Here is a 447-residue protein sequence, read N- to C-terminus: ATP-dependent protease ATPase subunit HslU (447 aa).

Residues Ile17, Gly59 to Glu64, Asp256, Glu321, and Arg393 contribute to the ATP site.

The protein belongs to the ClpX chaperone family. HslU subfamily. In terms of assembly, a double ring-shaped homohexamer of HslV is capped on each side by a ring-shaped HslU homohexamer. The assembly of the HslU/HslV complex is dependent on binding of ATP.

Its subcellular location is the cytoplasm. In terms of biological role, ATPase subunit of a proteasome-like degradation complex; this subunit has chaperone activity. The binding of ATP and its subsequent hydrolysis by HslU are essential for unfolding of protein substrates subsequently hydrolyzed by HslV. HslU recognizes the N-terminal part of its protein substrates and unfolds these before they are guided to HslV for hydrolysis. The sequence is that of ATP-dependent protease ATPase subunit HslU from Pseudomonas putida (strain W619).